Consider the following 536-residue polypeptide: Membrane protein insertase YidC (536 aa).

A helical transmembrane segment spans residues 5–25 (ALIAVILSIVFFYGYSALFPP). Residues 30 to 54 (APAPSAQQAVTGSQPGAPQASVAAV) are disordered. Residues 31 to 54 (PAPSAQQAVTGSQPGAPQASVAAV) are compositionally biased toward low complexity. Helical transmembrane passes span 350–370 (YGIA…PLTH), 420–440 (LPML…MFSI), 454–474 (LAGK…MVIQ), and 494–514 (PVVF…YWLV).

Belongs to the OXA1/ALB3/YidC family. Type 1 subfamily. In terms of assembly, interacts with the Sec translocase complex via SecD. Specifically interacts with transmembrane segments of nascent integral membrane proteins during membrane integration.

It localises to the cell inner membrane. Its function is as follows. Required for the insertion and/or proper folding and/or complex formation of integral membrane proteins into the membrane. Involved in integration of membrane proteins that insert both dependently and independently of the Sec translocase complex, as well as at least some lipoproteins. Aids folding of multispanning membrane proteins. The sequence is that of Membrane protein insertase YidC from Geobacter metallireducens (strain ATCC 53774 / DSM 7210 / GS-15).